We begin with the raw amino-acid sequence, 194 residues long: Large ribosomal subunit protein eL15 (194 aa).

Positions 162 to 194 (LTSAGRKSRGLRNKGKGAEKVRPSVRANKGKTK) are disordered. Basic residues predominate over residues 167–176 (RKSRGLRNKG).

Belongs to the eukaryotic ribosomal protein eL15 family.

The polypeptide is Large ribosomal subunit protein eL15 (Thermococcus onnurineus (strain NA1)).